We begin with the raw amino-acid sequence, 289 residues long: Protoheme IX farnesyltransferase (289 aa).

The next 9 membrane-spanning stretches (helical) occupy residues 9–29 (VALMKLRVVELLLITTVPVMM), 40–60 (LIAVTLVAGTLAAGSANTINC), 89–109 (LTFGIVIGIVSTLLFGFLVNW), 110–130 (PSALLADGAIAFYVFVYTLGL), 134–154 (TPSNIVIGGAAGCFPVLIGWS), 155–175 (AVTGTVGWAAVLLFAVVFFWT), 190–209 (YAAAGVPMLPVVASVQVVTR), 228–248 (VASTGPVYLVAAVAVGAWFLV), and 269–289 (FHMSITYLTLLFVAIAVTALV).

This sequence belongs to the UbiA prenyltransferase family. Protoheme IX farnesyltransferase subfamily.

Its subcellular location is the cell membrane. The catalysed reaction is heme b + (2E,6E)-farnesyl diphosphate + H2O = Fe(II)-heme o + diphosphate. It functions in the pathway porphyrin-containing compound metabolism; heme O biosynthesis; heme O from protoheme: step 1/1. In terms of biological role, converts heme B (protoheme IX) to heme O by substitution of the vinyl group on carbon 2 of heme B porphyrin ring with a hydroxyethyl farnesyl side group. This is Protoheme IX farnesyltransferase from Frankia casuarinae (strain DSM 45818 / CECT 9043 / HFP020203 / CcI3).